Consider the following 104-residue polypeptide: Large ribosomal subunit protein uL24 (104 aa).

This sequence belongs to the universal ribosomal protein uL24 family. In terms of assembly, part of the 50S ribosomal subunit.

In terms of biological role, one of two assembly initiator proteins, it binds directly to the 5'-end of the 23S rRNA, where it nucleates assembly of the 50S subunit. One of the proteins that surrounds the polypeptide exit tunnel on the outside of the subunit. This chain is Large ribosomal subunit protein uL24, found in Bradyrhizobium sp. (strain ORS 278).